The chain runs to 736 residues: Zinc finger CCCH domain-containing protein 14 (736 aa).

Residue Met1 is modified to N-acetylmethionine. Composition is skewed to polar residues over residues 77 to 103 (TTEP…SNFS) and 131 to 145 (VSTS…NVRQ). The interval 77–145 (TTEPSSLKSS…QESKTTNVRQ (69 aa)) is disordered. Ser85 bears the Phosphoserine mark. Glycyl lysine isopeptide (Lys-Gly) (interchain with G-Cter in SUMO2) cross-links involve residues Lys99, Lys139, Lys175, and Lys198. At Ser240 the chain carries Phosphoserine. Lys245 is covalently cross-linked (Glycyl lysine isopeptide (Lys-Gly) (interchain with G-Cter in SUMO2)). A Phosphoserine modification is found at Ser281. Residues Lys283 and Lys295 each participate in a glycyl lysine isopeptide (Lys-Gly) (interchain with G-Cter in SUMO2) cross-link. The interval 310–350 (HDGEEEEEDDDYGSRTGSISSSVSVPAKPERRPSLPPSKQA) is disordered. A phosphoserine mark is found at Ser327 and Ser343. An N6-acetyllysine; alternate modification is found at Lys357. Residue Lys357 forms a Glycyl lysine isopeptide (Lys-Gly) (interchain with G-Cter in SUMO2); alternate linkage. Lys378 is covalently cross-linked (Glycyl lysine isopeptide (Lys-Gly) (interchain with G-Cter in SUMO2)). A phosphoserine mark is found at Ser390 and Ser409. The disordered stretch occupies residues 398 to 430 (VVQGQSRTPRISPPIKEEETKGDSVEKNQGTQQ). Basic and acidic residues predominate over residues 412 to 423 (IKEEETKGDSVE). Lys413 participates in a covalent cross-link: Glycyl lysine isopeptide (Lys-Gly) (interchain with G-Cter in SUMO2). Position 421 is a phosphoserine (Ser421). Lys489 is covalently cross-linked (Glycyl lysine isopeptide (Lys-Gly) (interchain with G-Cter in SUMO2)). Ser498, Ser515, Ser527, and Ser620 each carry phosphoserine. 5 consecutive C3H1-type zinc fingers follow at residues 595-620 (EKLL…HPIS), 621-640 (PCKA…VHPN), 641-656 (CKYD…PFTH), 682-699 (CRYF…YHPK), and 701-719 (CRFN…HPTI).

Belongs to the ZC3H14 family. As to quaternary structure, homodimer; facilitating circular RNAs (circRNAs) formation. Associates with the spliceosome. Interacts with HOOK2. Interacts with ZFC3H1 in a RNase-sensitive manner. In terms of tissue distribution, expressed in fetal and adult brain. Expressed in fetal and adult temporal lobe.

It is found in the nucleus speckle. It localises to the cytoplasm. RNA-binding protein involved in the biogenesis of circular RNAs (circRNAs), which are produced by back-splicing circularization of pre-mRNAs. Acts by binding to both exon-intron boundary and 3'-UTR of pre-mRNAs to promote circRNA biogenesis through dimerization and the association with the spliceosome. Required for spermatogenesis via involvement in circRNA biogenesis. Regulates the pre-mRNA processing of ATP5MC1; preventing its degradation. Also binds the poly(A) tail of mRNAs; controlling poly(A) length in neuronal cells. This is Zinc finger CCCH domain-containing protein 14 from Homo sapiens (Human).